A 176-amino-acid polypeptide reads, in one-letter code: Adenine phosphoribosyltransferase (176 aa).

It belongs to the purine/pyrimidine phosphoribosyltransferase family. Homodimer.

The protein resides in the cytoplasm. The catalysed reaction is AMP + diphosphate = 5-phospho-alpha-D-ribose 1-diphosphate + adenine. The protein operates within purine metabolism; AMP biosynthesis via salvage pathway; AMP from adenine: step 1/1. Its function is as follows. Catalyzes a salvage reaction resulting in the formation of AMP, that is energically less costly than de novo synthesis. This chain is Adenine phosphoribosyltransferase, found in Borrelia garinii subsp. bavariensis (strain ATCC BAA-2496 / DSM 23469 / PBi) (Borreliella bavariensis).